The following is a 154-amino-acid chain: Myoglobin (154 aa).

In terms of domain architecture, Globin spans 2–148; that stretch reads GLSDEEWKKV…FRNDMASRYK (147 aa). Residue His65 coordinates nitrite. His65 is a binding site for O2. Residue His94 coordinates heme b.

Belongs to the globin family. Monomeric.

Its subcellular location is the cytoplasm. It is found in the sarcoplasm. It catalyses the reaction Fe(III)-heme b-[protein] + nitric oxide + H2O = Fe(II)-heme b-[protein] + nitrite + 2 H(+). The enzyme catalyses H2O2 + AH2 = A + 2 H2O. In terms of biological role, monomeric heme protein which primary function is to store oxygen and facilitate its diffusion within muscle tissues. Reversibly binds oxygen through a pentacoordinated heme iron and enables its timely and efficient release as needed during periods of heightened demand. Depending on the oxidative conditions of tissues and cells, and in addition to its ability to bind oxygen, it also has a nitrite reductase activity whereby it regulates the production of bioactive nitric oxide. Under stress conditions, like hypoxia and anoxia, it also protects cells against reactive oxygen species thanks to its pseudoperoxidase activity. The polypeptide is Myoglobin (MB) (Varanus varius (Lace monitor lizard)).